We begin with the raw amino-acid sequence, 156 residues long: ATP synthase subunit b (156 aa).

A helical transmembrane segment spans residues 7 to 29 (LIGQSVAFLIFVWFCMKFVWPPL).

Belongs to the ATPase B chain family. F-type ATPases have 2 components, F(1) - the catalytic core - and F(0) - the membrane proton channel. F(1) has five subunits: alpha(3), beta(3), gamma(1), delta(1), epsilon(1). F(0) has three main subunits: a(1), b(2) and c(10-14). The alpha and beta chains form an alternating ring which encloses part of the gamma chain. F(1) is attached to F(0) by a central stalk formed by the gamma and epsilon chains, while a peripheral stalk is formed by the delta and b chains.

It localises to the cell inner membrane. Functionally, f(1)F(0) ATP synthase produces ATP from ADP in the presence of a proton or sodium gradient. F-type ATPases consist of two structural domains, F(1) containing the extramembraneous catalytic core and F(0) containing the membrane proton channel, linked together by a central stalk and a peripheral stalk. During catalysis, ATP synthesis in the catalytic domain of F(1) is coupled via a rotary mechanism of the central stalk subunits to proton translocation. Component of the F(0) channel, it forms part of the peripheral stalk, linking F(1) to F(0). This is ATP synthase subunit b from Shewanella denitrificans (strain OS217 / ATCC BAA-1090 / DSM 15013).